The primary structure comprises 97 residues: Secreted LysM effector Mg1LysM (97 aa).

The first 18 residues, 1–18 (MQFTALVAALLSVAAVQA), serve as a signal peptide directing secretion. The 48-residue stretch at 37-84 (QQYVARSGDTLTKIAQEIYHDVVGVCDIARANNLADPNRIDAGTPYTI) folds into the LysM domain. Glycine 44, threonine 48, asparagine 74, and isoleucine 76 together coordinate chitin.

The protein belongs to the secreted LysM effector family. As to quaternary structure, forms homodimers in a chitin-independent manner through interactions at the N-termini of Mg1LysM monomers. Homodimers are further polymerized in a chitin-dependent manner.

The protein localises to the secreted. Its subcellular location is the cell wall. Functionally, secreted effector that enables the plant pathogenic fungus to manipulate host defenses for successful infection. Binds chitin but not cellulose or xylan. Chitin-induced polymerization of homodimers forms a contiguous Mg1LysM highly oligomeric super-complexe that is anchored to the chitin in the fungal cell wall to prevent hydrolysis by host chitinases. This chain is Secreted LysM effector Mg1LysM, found in Zymoseptoria tritici (strain ST99CH_3D7).